Reading from the N-terminus, the 553-residue chain is Phospholipase-B 81 (553 aa).

The N-terminal stretch at 1–35 (MVRFGSAASSDNRRRRCWSWYWGGLLLLWAVAETR) is a signal peptide. N69, N313, N416, and N531 each carry an N-linked (GlcNAc...) asparagine glycan.

It belongs to the phospholipase B-like family. As to expression, expressed by the venom gland.

The protein localises to the secreted. May cause hemolysis. This chain is Phospholipase-B 81, found in Drysdalia coronoides (White-lipped snake).